The sequence spans 79 residues: MADHASKIKDIIEKELGVEREKLTPEASFIEDLGADSLDIVELVMEFEKEFNIDIPDEDAEKLRTVGDAVAYLEAKVGG.

A Carrier domain is found at 2–77; it reads ADHASKIKDI…DAVAYLEAKV (76 aa). The residue at position 37 (serine 37) is an O-(pantetheine 4'-phosphoryl)serine.

Belongs to the acyl carrier protein (ACP) family. In terms of processing, 4'-phosphopantetheine is transferred from CoA to a specific serine of apo-ACP by AcpS. This modification is essential for activity because fatty acids are bound in thioester linkage to the sulfhydryl of the prosthetic group.

It is found in the cytoplasm. It functions in the pathway lipid metabolism; fatty acid biosynthesis. Carrier of the growing fatty acid chain in fatty acid biosynthesis. This is Acyl carrier protein from Gemmatimonas aurantiaca (strain DSM 14586 / JCM 11422 / NBRC 100505 / T-27).